Consider the following 201-residue polypeptide: Ribonuclease MRP protein subunit RMP1 (201 aa).

The helical transmembrane segment at 86-108 (YWQFNGVIALGQFVTLGCTLVTL) threads the bilayer.

As to quaternary structure, component of RNase MRP complex which consists of an RNA moiety and at least 10 protein subunits including POP1, POP3, POP4, POP5, POP6, POP7, POP8, RMP1, RPP1 and SNM1, many of which are shared with the RNase P complex.

The protein localises to the membrane. It localises to the cytoplasm. It is found in the nucleus. Functionally, functions as part of ribonuclease MRP (RNase MRP), which is involved in rRNA processing in mitochondria. The polypeptide is Ribonuclease MRP protein subunit RMP1 (Saccharomyces cerevisiae (strain ATCC 204508 / S288c) (Baker's yeast)).